The sequence spans 428 residues: MRVQRPKGTVDILPETSGQWEKVEQTARDLFKRANYHEIRTPSFENYELFSRSSGETSDVVEKEMYDFEDKGGRHIALRPEGTAGVVRAYVENKIYGPDYVKPFNVYYIAAMYRYERPQAGRQREFHQIGVESFGSNGYLADVETILLGHDLLAELGVKNYELHINTLGDSEVRQAYHDALVDYFTPVKDQLSEDSQRRLGKNPLRILDSKAEEDQQFLSEAPKIRDYLDEESKENFNKILASLDKLGVKYVIDDDLVRGLDYYTGVIFEFMVDDPTLWASPSTVLGGGRYNHLVEEFSGPETPAVGFGIGEERLMLVLSKQNPEMFEDQGIDFFITNIGEGTDIKAVEVARQLRSLGFSAQYDVDQKKLKAQFRKADRVGARYVVTLGAKELAEGKLTVKRLSDGQQFSLEFTDLEDKTNLLSKIEK.

The protein belongs to the class-II aminoacyl-tRNA synthetase family. As to quaternary structure, homodimer.

The protein resides in the cytoplasm. It catalyses the reaction tRNA(His) + L-histidine + ATP = L-histidyl-tRNA(His) + AMP + diphosphate + H(+). The polypeptide is Histidine--tRNA ligase (Lactobacillus delbrueckii subsp. bulgaricus (strain ATCC 11842 / DSM 20081 / BCRC 10696 / JCM 1002 / NBRC 13953 / NCIMB 11778 / NCTC 12712 / WDCM 00102 / Lb 14)).